We begin with the raw amino-acid sequence, 438 residues long: Transmembrane protein 184C (438 aa).

The next 7 membrane-spanning stretches (helical) occupy residues 17–37, 48–68, 86–106, 179–199, 212–232, 254–274, and 287–307; these read LVAVIYLVSIVVAVPLCVWEL, AWFIAGIFLLLTIPISLWVIL, ILWMVPIYSLDSWIALKYPGI, YTVVRPFTTIVALICELLGIY, YLVIINNMSQLFAMYCLLLFY, VVFVSFWQAVVIALLVKVGVI, and AVATGLQDFIICIEMFLAAIA. The interval 358 to 438 is disordered; that stretch reads PRKKLFPEDQ…KEPSDKSVDS (81 aa). 2 stretches are compositionally biased toward low complexity: residues 374 to 390 and 404 to 413; these read SLLSSSSQDAISIASSM and TVTPQTTPTT. S422 carries the phosphoserine modification. A compositionally biased stretch (basic and acidic residues) spans 425–438; the sequence is IGEKKEPSDKSVDS.

It belongs to the TMEM184 family.

It is found in the membrane. In terms of biological role, possible tumor suppressor which may play a role in cell growth. The protein is Transmembrane protein 184C (TMEM184C) of Pongo abelii (Sumatran orangutan).